We begin with the raw amino-acid sequence, 158 residues long: NAD(P)H-quinone oxidoreductase subunit J, chloroplastic (158 aa).

The protein belongs to the complex I 30 kDa subunit family. In terms of assembly, NDH is composed of at least 16 different subunits, 5 of which are encoded in the nucleus.

It is found in the plastid. The protein localises to the chloroplast thylakoid membrane. It catalyses the reaction a plastoquinone + NADH + (n+1) H(+)(in) = a plastoquinol + NAD(+) + n H(+)(out). The catalysed reaction is a plastoquinone + NADPH + (n+1) H(+)(in) = a plastoquinol + NADP(+) + n H(+)(out). In terms of biological role, NDH shuttles electrons from NAD(P)H:plastoquinone, via FMN and iron-sulfur (Fe-S) centers, to quinones in the photosynthetic chain and possibly in a chloroplast respiratory chain. The immediate electron acceptor for the enzyme in this species is believed to be plastoquinone. Couples the redox reaction to proton translocation, and thus conserves the redox energy in a proton gradient. This is NAD(P)H-quinone oxidoreductase subunit J, chloroplastic from Drimys granadensis.